Consider the following 332-residue polypeptide: Ferredoxin--NADP reductase 1 (332 aa).

Positions 35, 43, 48, 88, 123, 284, and 325 each coordinate FAD.

The protein belongs to the ferredoxin--NADP reductase type 2 family. As to quaternary structure, homodimer. Requires FAD as cofactor.

It carries out the reaction 2 reduced [2Fe-2S]-[ferredoxin] + NADP(+) + H(+) = 2 oxidized [2Fe-2S]-[ferredoxin] + NADPH. This Listeria monocytogenes serovar 1/2a (strain ATCC BAA-679 / EGD-e) protein is Ferredoxin--NADP reductase 1.